Consider the following 391-residue polypeptide: Fructose-bisphosphate aldolase 3, chloroplastic (391 aa).

Residues 1-40 (MASASFVKPNTLSSPWIGQRSFAHTSASSSPPPRVSFAIR) constitute a chloroplast transit peptide. Arg-88 provides a ligand contact to substrate. Ser-150 carries the post-translational modification Phosphoserine. Position 178 (Lys-178) interacts with substrate. A Phosphoserine modification is found at Ser-208. The active-site Proton acceptor is Glu-218. The active-site Schiff-base intermediate with dihydroxyacetone-P is the Lys-260. Residue 302–304 (SGG) participates in substrate binding. N6,N6,N6-trimethyllysine is present on Lys-387.

Belongs to the class I fructose-bisphosphate aldolase family. Homotetramer. Post-translationally, can be trimethylated at Lys-387 by LSMT-L, but the trimethylation has no effect in vitro. In terms of processing, S-glutathionylated. In terms of tissue distribution, expressed in roots, and at low levels in rosettes leaves, cauline leaves, stems and flowers.

It localises to the plastid. The protein resides in the chloroplast. It is found in the plastoglobule. The catalysed reaction is beta-D-fructose 1,6-bisphosphate = D-glyceraldehyde 3-phosphate + dihydroxyacetone phosphate. It participates in carbohydrate degradation; glycolysis; D-glyceraldehyde 3-phosphate and glycerone phosphate from D-glucose: step 4/4. Functionally, plays a key role in glycolysis and gluconeogenesis. This Arabidopsis thaliana (Mouse-ear cress) protein is Fructose-bisphosphate aldolase 3, chloroplastic.